A 192-amino-acid chain; its full sequence is Large ribosomal subunit protein bL9 (192 aa).

Residues 172 to 192 are disordered; the sequence is DALRPEDFFDPEADGVDEDEA. Acidic residues predominate over residues 179 to 192; that stretch reads FFDPEADGVDEDEA.

It belongs to the bacterial ribosomal protein bL9 family.

Its function is as follows. Binds to the 23S rRNA. This Rhizobium leguminosarum bv. trifolii (strain WSM2304) protein is Large ribosomal subunit protein bL9.